We begin with the raw amino-acid sequence, 179 residues long: Small ribosomal subunit protein uS5 (179 aa).

An S5 DRBM domain is found at 22-85 (MIEKLVAVNR…EYARKRMANV (64 aa)).

This sequence belongs to the universal ribosomal protein uS5 family. Part of the 30S ribosomal subunit. Contacts proteins S4 and S8.

Its function is as follows. With S4 and S12 plays an important role in translational accuracy. Located at the back of the 30S subunit body where it stabilizes the conformation of the head with respect to the body. The sequence is that of Small ribosomal subunit protein uS5 from Xylella fastidiosa (strain M12).